Consider the following 140-residue polypeptide: Small ribosomal subunit protein uS12 (140 aa).

Residues 1-20 (MPTINQLVRKGRQSKVVKSD) are disordered. Residue Asp-102 is modified to 3-methylthioaspartic acid. The disordered stretch occupies residues 121 to 140 (DGRMQGRSKYGTKRPKAAKK). Basic residues predominate over residues 130–140 (YGTKRPKAAKK).

It belongs to the universal ribosomal protein uS12 family. As to quaternary structure, part of the 30S ribosomal subunit. Contacts proteins S8 and S17. May interact with IF1 in the 30S initiation complex.

In terms of biological role, with S4 and S5 plays an important role in translational accuracy. Interacts with and stabilizes bases of the 16S rRNA that are involved in tRNA selection in the A site and with the mRNA backbone. Located at the interface of the 30S and 50S subunits, it traverses the body of the 30S subunit contacting proteins on the other side and probably holding the rRNA structure together. The combined cluster of proteins S8, S12 and S17 appears to hold together the shoulder and platform of the 30S subunit. The polypeptide is Small ribosomal subunit protein uS12 (Exiguobacterium sibiricum (strain DSM 17290 / CCUG 55495 / CIP 109462 / JCM 13490 / 255-15)).